The chain runs to 969 residues: Dual serine/threonine and tyrosine protein kinase (969 aa).

Residues 7–37 adopt a coiled-coil conformation; the sequence is QEFRRYLRNRNQLQHVLEETQQALELINLEN. The region spanning 632-894 is the Protein kinase domain; sequence PHCAEEIGRG…PLLGAIVPVL (263 aa). ATP is bound by residues 638 to 646 and lysine 662; that span reads IGRGQYGIV. The Proton acceptor role is filled by aspartate 760. Residues 904–945 are disordered; it reads SKSLQEVSSDKLQESSTDSRNPALALAEPYNQRGTVVSPPPT.

It belongs to the protein kinase superfamily. Ser/Thr protein kinase family.

The protein localises to the cytoplasm. It catalyses the reaction L-seryl-[protein] + ATP = O-phospho-L-seryl-[protein] + ADP + H(+). It carries out the reaction L-threonyl-[protein] + ATP = O-phospho-L-threonyl-[protein] + ADP + H(+). The enzyme catalyses L-tyrosyl-[protein] + ATP = O-phospho-L-tyrosyl-[protein] + ADP + H(+). In Apis mellifera (Honeybee), this protein is Dual serine/threonine and tyrosine protein kinase.